The primary structure comprises 669 residues: Elongation factor G 2 (669 aa).

One can recognise a tr-type G domain in the interval Met-1–Phe-276. GTP contacts are provided by residues Ala-10–Thr-17, Asp-74–His-78, and Asn-128–Asp-131.

Belongs to the TRAFAC class translation factor GTPase superfamily. Classic translation factor GTPase family. EF-G/EF-2 subfamily.

Its subcellular location is the cytoplasm. In terms of biological role, catalyzes the GTP-dependent ribosomal translocation step during translation elongation. During this step, the ribosome changes from the pre-translocational (PRE) to the post-translocational (POST) state as the newly formed A-site-bound peptidyl-tRNA and P-site-bound deacylated tRNA move to the P and E sites, respectively. Catalyzes the coordinated movement of the two tRNA molecules, the mRNA and conformational changes in the ribosome. This chain is Elongation factor G 2 (fusA2), found in Borreliella afzelii (strain PKo) (Borrelia afzelii).